The primary structure comprises 325 residues: Elongation factor P--(R)-beta-lysine ligase (325 aa).

76–78 (SPE) serves as a coordination point for substrate. Residues 100–102 (RNE) and asparagine 109 contribute to the ATP site. Residue tyrosine 118 participates in substrate binding. 244-245 (EL) is an ATP binding site. Residue glutamate 251 participates in substrate binding. Position 300 (glycine 300) interacts with ATP.

Belongs to the class-II aminoacyl-tRNA synthetase family. EpmA subfamily. In terms of assembly, homodimer.

It carries out the reaction D-beta-lysine + L-lysyl-[protein] + ATP = N(6)-((3R)-3,6-diaminohexanoyl)-L-lysyl-[protein] + AMP + diphosphate + H(+). Functionally, with EpmB is involved in the beta-lysylation step of the post-translational modification of translation elongation factor P (EF-P). Catalyzes the ATP-dependent activation of (R)-beta-lysine produced by EpmB, forming a lysyl-adenylate, from which the beta-lysyl moiety is then transferred to the epsilon-amino group of a conserved specific lysine residue in EF-P. This Pectobacterium atrosepticum (strain SCRI 1043 / ATCC BAA-672) (Erwinia carotovora subsp. atroseptica) protein is Elongation factor P--(R)-beta-lysine ligase.